The primary structure comprises 342 residues: Tetraacyldisaccharide 4'-kinase (342 aa).

Thr-68–Thr-75 is a binding site for ATP.

The protein belongs to the LpxK family.

The catalysed reaction is a lipid A disaccharide + ATP = a lipid IVA + ADP + H(+). It participates in glycolipid biosynthesis; lipid IV(A) biosynthesis; lipid IV(A) from (3R)-3-hydroxytetradecanoyl-[acyl-carrier-protein] and UDP-N-acetyl-alpha-D-glucosamine: step 6/6. Transfers the gamma-phosphate of ATP to the 4'-position of a tetraacyldisaccharide 1-phosphate intermediate (termed DS-1-P) to form tetraacyldisaccharide 1,4'-bis-phosphate (lipid IVA). This chain is Tetraacyldisaccharide 4'-kinase, found in Burkholderia multivorans (strain ATCC 17616 / 249).